Consider the following 198-residue polypeptide: Nucleoside triphosphate pyrophosphatase 1 (198 aa).

Residue Asp-75 is the Proton acceptor of the active site.

This sequence belongs to the Maf family. A divalent metal cation serves as cofactor.

The protein resides in the cytoplasm. It carries out the reaction a ribonucleoside 5'-triphosphate + H2O = a ribonucleoside 5'-phosphate + diphosphate + H(+). The catalysed reaction is a 2'-deoxyribonucleoside 5'-triphosphate + H2O = a 2'-deoxyribonucleoside 5'-phosphate + diphosphate + H(+). Functionally, nucleoside triphosphate pyrophosphatase. May have a dual role in cell division arrest and in preventing the incorporation of modified nucleotides into cellular nucleic acids. The protein is Nucleoside triphosphate pyrophosphatase 1 of Jannaschia sp. (strain CCS1).